Consider the following 948-residue polypeptide: Protocadherin alpha-10 (948 aa).

The N-terminal stretch at 1–28 (MVSRCSCLGVQCLLLSLLLLAAWEVGSG) is a signal peptide. Cadherin domains are found at residues 29-132 (QLHY…PPRF), 133-241 (SVTE…APIF), 242-349 (DRPV…SPEV), 350-454 (IVTS…APAF), 455-564 (AQPE…APAL), and 587-689 (GHVV…APEV). The Extracellular segment spans residues 29–695 (QLHYSVYEEA…APEVALVDVN (667 aa)). N-linked (GlcNAc...) asparagine glycosylation is found at N256 and N264. N547 carries N-linked (GlcNAc...) asparagine glycosylation. Residues 696 to 716 (VYLIIAICAVSSLLVLTLLLY) traverse the membrane as a helical segment. At 717–948 (TALRCSAAPT…GNSTTDNSDQ (232 aa)) the chain is on the cytoplasmic side. PXXP repeat units follow at residues 732–735 (PVKP), 772–775 (PSLP), 797–800 (PRQP), 830–833 (PGGP), 871–874 (PGNP), and 889–892 (PGSP). Positions 732-892 (PVKPTLVCSS…PDKFIIPGSP (161 aa)) are 6 X 4 AA repeats of P-X-X-P. Disordered regions lie at residues 783-804 (DGED…NPDW) and 827-948 (RAGP…NSDQ). Positions 907–921 (DKSDFITFGKKEETK) are enriched in basic and acidic residues.

The protein resides in the cell membrane. Potential calcium-dependent cell-adhesion protein. May be involved in the establishment and maintenance of specific neuronal connections in the brain. In Pan troglodytes (Chimpanzee), this protein is Protocadherin alpha-10 (PCDHA10).